The following is a 311-amino-acid chain: Histidine decarboxylase proenzyme (311 aa).

2 residues coordinate substrate: Asp64 and Ser82. Ser83 is subject to Pyruvic acid (Ser). The Proton donor role is filled by Glu198.

In terms of assembly, the proenzyme is a hexamer of identical pi chains; each pi chain monomer is cleaved to form a small (or beta) chain and a large (or alpha) chain by non-hydrolytic self-catalysis. Requires pyruvate as cofactor.

It catalyses the reaction L-histidine + H(+) = histamine + CO2. This Lactobacillus sp. (strain 30a) protein is Histidine decarboxylase proenzyme (hdcA).